Here is a 338-residue protein sequence, read N- to C-terminus: Heat-inducible transcription repressor HrcA (338 aa).

The protein belongs to the HrcA family.

In terms of biological role, negative regulator of class I heat shock genes (grpE-dnaK-dnaJ and groELS operons). Prevents heat-shock induction of these operons. This Bacillus cereus (strain B4264) protein is Heat-inducible transcription repressor HrcA.